A 649-amino-acid polypeptide reads, in one-letter code: Forkhead box protein O1 (649 aa).

Disordered stretches follow at residues 1–62 (MAEA…ASAS) and 112–151 (VHSAPPQPPPTGPLSQPPPVPPAAAGPLAGQPRKTSSSRR). Residue Thr-24 is modified to Phosphothreonine; by PKB/AKT1 or PKB/AKT2 and SGK1. A compositionally biased stretch (low complexity) spans 33-62 (NQSNSTTSSPAPSGSTAANPDATASLASAS). Pro residues predominate over residues 116-135 (PPQPPPTGPLSQPPPVPPAA). Positions 154–248 (WGNLSYADLI…KSGKSPRRRA (95 aa)) form a DNA-binding region, fork-head. DNA-binding stretches follow at residues 205–212 (NSIRHNLS) and 228–231 (SSWW). The residue at position 206 (Ser-206) is a Phosphoserine; by STK4/MST1. Residues Ser-212, Ser-228, and Ser-229 each carry the phosphoserine modification. Residues 228–339 (SSWWMLNPEG…DDLGDGDVHS (112 aa)) are disordered. N6-acetyllysine occurs at positions 239 and 242. A Phosphoserine; by CDK1 modification is found at Ser-243. Omega-N-methylarginine; by PRMT1 is present on residues Arg-245 and Arg-247. Residues 245–247 (RRR) carry the Nuclear localization signal motif. Position 250 is a phosphoserine; by PKB/AKT1 and SGK1 (Ser-250). 3 positions are modified to N6-acetyllysine: Lys-256, Lys-259, and Lys-268. Basic residues predominate over residues 258 to 269 (AKSRGRAAKKKA). Residues 277-557 (GPGDSPGSQF…RLTPVKTPLQ (281 aa)) are sufficient for interaction with NLK. Phosphoserine is present on residues Ser-281 and Ser-292. Positions 303–320 (NWSTFRPRTSSNASTISG) are enriched in polar residues. Phosphoserine; by PKB/AKT1 is present on Ser-313. Ser-316 is modified (phosphoserine; by CK1 and SGK1). Ser-319 bears the Phosphoserine; by CK1 mark. At Ser-323 the chain carries Phosphoserine. Thr-327 carries the phosphothreonine modification. A required for interaction with RUNX2 region spans residues 357-453 (SEISNPENME…GGLNQYNCAP (97 aa)). Lys-417 carries the post-translational modification N6-acetyllysine. The short motif at 456-460 (LKELL) is the Required for interaction with SIRT1 element.

Interacts with LRPPRC. Interacts with RUNX2; the interaction inhibits RUNX2 transcriptional activity and mediates the IGF1/insulin-dependent BGLAP expression in osteoblasts Interacts with PPP2R1A; the interaction regulates the dephosphorylation of FOXO1 at Thr-24 and Ser-250 leading to its nuclear import. Interacts with NLK. Interacts with SIRT1; the interaction results in the deacetylation of FOXO1 leading to activation of FOXO1-mediated transcription of genes involved in DNA repair and stress resistance. Binds to CDK1. Interacts with the 14-3-3 proteins, YWHAG and YWHAZ; the interactions require insulin-stimulated phosphorylation on Thr-24, promote nuclear exit and loss of transcriptional activity. Interacts with SKP2; the interaction ubiquitinates FOXO1 leading to its proteasomal degradation. The interaction requires the presence of KRIT1. Interacts (via the C-terminal half) with ATF4 (via its DNA binding domain); the interaction occurs in osteoblasts, regulates glucose homeostasis via suppression of beta-cell proliferation and subsequent decrease in insulin production. Interacts with PRMT1; the interaction methylates FOXO1, prevents PKB/AKT1 phosphorylation and retains FOXO1 in the nucleus. Interacts with EP300 and CREBBP; the interactions acetylate FOXO1. Interacts with SIRT2; the interaction is disrupted in response to oxidative stress or serum deprivation, leading to increased level of acetylated FOXO1, which promotes stress-induced autophagy by stimulating E1-like activating enzyme ATG7. Interacts (acetylated form) with ATG7; the interaction is increased in response to oxidative stress or serum deprivation and promotes the autophagic process leading to cell death. Interacts (acetylated form) with PPARG. Interacts with XBP1; this interaction is direct and leads to FOXO1 ubiquitination and degradation via the proteasome pathway. Interacts (via the Fork-head domain) with CEBPA; the interaction increases when FOXO1 is deacetylated. Interacts with WDFY2. Forms a complex with WDFY2 and AKT1. Interacts with CRY1. Interacts with PPIA/CYPA; the interaction promotes FOXO1 dephosphorylation, nuclear accumulation and transcriptional activity. Interacts with TOX4; FOXO1 is required for full induction of TOX4-dependent activity and the interaction is inhibited by insulin. Interacts (when phosphorylated on Ser-250) with STUB1/CHIP. Post-translationally, phosphorylation by NLK promotes nuclear export and inhibits the transcriptional activity. In response to growth factors, phosphorylation on Thr-24, Ser-250 and Ser-313 by PKB/AKT1 promotes nuclear export and inactivation of transactivational activity. Phosphorylation on Thr-24 is required for binding 14-3-3 proteins. Phosphorylation of Ser-250 decreases DNA-binding activity and promotes the phosphorylation of Thr-24 and Ser-313, permitting phosphorylation of Ser-316 and Ser-319, probably by CDK1, leading to nuclear exclusion and loss of function. Stress signals, such as response to oxygen or nitric oxide, attenuate the PKB/AKT1-mediated phosphorylation leading to nuclear retention. Phosphorylation of Ser-323 is independent of IGF1 and leads to reduced function. Dephosphorylated on Thr-24 and Ser-250 by PP2A in beta-cells under oxidative stress leading to nuclear retention. Phosphorylation of Ser-243 by CDK1 disrupts binding of 14-3-3 proteins leading to nuclear accumulation and has no effect on DNA binding nor transcriptional activity. Phosphorylation by STK4/MST1 on Ser-206, upon oxidative stress, inhibits binding to 14-3-3 proteins and nuclear export. PPIA/CYPA promotes its dephosphorylation on Ser-250. In terms of processing, ubiquitinated by SKP2. Ubiquitination leads to proteasomal degradation. Ubiquitinated by STUB1/CHIP; when Ser-250 is phosphorylated. Methylation inhibits AKT1-mediated phosphorylation at Ser-250 and is increased by oxidative stress. Post-translationally, acetylated. Acetylation at Lys-256 and Lys-268 are necessary for autophagic cell death induction. Deacetylated by SIRT2 in response to oxidative stress or serum deprivation, thereby negatively regulating FOXO1-mediated autophagic cell death. Once in the nucleus, acetylated by CREBBP/EP300. Acetylation diminishes the interaction with target DNA and attenuates the transcriptional activity. It increases the phosphorylation at Ser-250. Deacetylation by SIRT1 results in reactivation of the transcriptional activity. Oxidative stress by hydrogen peroxide treatment appears to promote deacetylation and uncoupling of insulin-induced phosphorylation. By contrast, resveratrol acts independently of acetylation. Acetylated at Lys-417, promoting its localization to the nucleus and transcription factor activity. Deacetylation at Lys-417 by SIRT6, promotes its translocation into the cytoplasm, preventing its transcription factor activity. Deacetylation and subsequent inhibition by SIRT6 has different effects depending on cell types: it inhibits gluconeogenesis in hepatocytes, promotes glucose sensing in pancreatic beta-cells and regulates lipid catabolism in brown adipocytes. In terms of tissue distribution, expressed in the internal elastic lamina of the carotid artery (at protein level).

It is found in the cytoplasm. It localises to the nucleus. Its function is as follows. Transcription factor that is the main target of insulin signaling and regulates metabolic homeostasis in response to oxidative stress. Binds to the insulin response element (IRE) with consensus sequence 5'-TT[G/A]TTTTG-3' and the related Daf-16 family binding element (DBE) with consensus sequence 5'-TT[G/A]TTTAC-3'. Activity suppressed by insulin. Main regulator of redox balance and osteoblast numbers and controls bone mass. Orchestrates the endocrine function of the skeleton in regulating glucose metabolism. Also acts as a key regulator of chondrogenic commitment of skeletal progenitor cells in response to lipid availability: when lipids levels are low, translocates to the nucleus and promotes expression of SOX9, which induces chondrogenic commitment and suppresses fatty acid oxidation. Acts synergistically with ATF4 to suppress osteocalcin/BGLAP activity, increasing glucose levels and triggering glucose intolerance and insulin insensitivity. Also suppresses the transcriptional activity of RUNX2, an upstream activator of osteocalcin/BGLAP. Acts as an inhibitor of glucose sensing in pancreatic beta cells by acting as a transcription repressor and suppressing expression of PDX1. In hepatocytes, promotes gluconeogenesis by acting together with PPARGC1A and CEBPA to activate the expression of genes such as IGFBP1, G6PC1 and PCK1. Also promotes gluconeogenesis by directly promoting expression of PPARGC1A and G6PC1. Important regulator of cell death acting downstream of CDK1, PKB/AKT1 and STK4/MST1. Promotes neural cell death. Mediates insulin action on adipose tissue. Regulates the expression of adipogenic genes such as PPARG during preadipocyte differentiation and, adipocyte size and adipose tissue-specific gene expression in response to excessive calorie intake. Regulates the transcriptional activity of GADD45A and repair of nitric oxide-damaged DNA in beta-cells. Required for the autophagic cell death induction in response to starvation or oxidative stress in a transcription-independent manner. Mediates the function of MLIP in cardiomyocytes hypertrophy and cardiac remodeling. Positive regulator of apoptosis in cardiac smooth muscle cells as a result of its transcriptional activation of pro-apoptotic genes. Regulates endothelial cell (EC) viability and apoptosis in a PPIA/CYPA-dependent manner via transcription of CCL2 and BCL2L11 which are involved in EC chemotaxis and apoptosis. This chain is Forkhead box protein O1 (Foxo1), found in Rattus norvegicus (Rat).